The primary structure comprises 293 residues: Pantothenate synthetase (293 aa).

30 to 37 (MGYLHKGH) provides a ligand contact to ATP. Catalysis depends on His-37, which acts as the Proton donor. Residue Gln-61 participates in (R)-pantoate binding. Residue Gln-61 participates in beta-alanine binding. 147–150 (GEKD) lines the ATP pocket. Residue Gln-153 coordinates (R)-pantoate. Residues Val-176 and 184-187 (CSSR) contribute to the ATP site.

This sequence belongs to the pantothenate synthetase family. As to quaternary structure, homodimer.

The protein localises to the cytoplasm. The enzyme catalyses (R)-pantoate + beta-alanine + ATP = (R)-pantothenate + AMP + diphosphate + H(+). Its pathway is cofactor biosynthesis; (R)-pantothenate biosynthesis; (R)-pantothenate from (R)-pantoate and beta-alanine: step 1/1. Functionally, catalyzes the condensation of pantoate with beta-alanine in an ATP-dependent reaction via a pantoyl-adenylate intermediate. This chain is Pantothenate synthetase, found in Brucella abortus (strain S19).